Consider the following 528-residue polypeptide: Glycerol kinase 5 (528 aa).

ATP-binding residues include Ser-28 and Ser-29. The glycerol site is built by Arg-98, Asp-275, and Gln-276. ATP contacts are provided by Thr-297, Gly-340, and Gly-440.

The protein belongs to the FGGY kinase family.

It localises to the cytoplasm. It catalyses the reaction glycerol + ATP = sn-glycerol 3-phosphate + ADP + H(+). Its pathway is polyol metabolism; glycerol degradation via glycerol kinase pathway; sn-glycerol 3-phosphate from glycerol: step 1/1. In terms of biological role, skin-specific kinase that plays a key role in glycerol metabolism, catalyzing its phosphorylation to produce sn-glycerol 3-phosphate. Involved in skin-specific regulation of sterol regulatory element-binding protein (SREBP) processing and lipid biosynthesis. This Bos taurus (Bovine) protein is Glycerol kinase 5 (GK5).